We begin with the raw amino-acid sequence, 306 residues long: Homoserine kinase (306 aa).

P91–A101 lines the ATP pocket.

This sequence belongs to the GHMP kinase family. Homoserine kinase subfamily.

The protein localises to the cytoplasm. It carries out the reaction L-homoserine + ATP = O-phospho-L-homoserine + ADP + H(+). It participates in amino-acid biosynthesis; L-threonine biosynthesis; L-threonine from L-aspartate: step 4/5. Catalyzes the ATP-dependent phosphorylation of L-homoserine to L-homoserine phosphate. This chain is Homoserine kinase, found in Bacillus licheniformis (strain ATCC 14580 / DSM 13 / JCM 2505 / CCUG 7422 / NBRC 12200 / NCIMB 9375 / NCTC 10341 / NRRL NRS-1264 / Gibson 46).